The following is a 424-amino-acid chain: UDP-N-acetylglucosamine 1-carboxyvinyltransferase (424 aa).

22 to 23 (KN) serves as a coordination point for phosphoenolpyruvate. Arginine 98 contacts UDP-N-acetyl-alpha-D-glucosamine. Cysteine 122 (proton donor) is an active-site residue. Residue cysteine 122 is modified to 2-(S-cysteinyl)pyruvic acid O-phosphothioketal. Residues 127-131 (RPVDQ), aspartate 312, and isoleucine 334 each bind UDP-N-acetyl-alpha-D-glucosamine.

This sequence belongs to the EPSP synthase family. MurA subfamily.

Its subcellular location is the cytoplasm. The enzyme catalyses phosphoenolpyruvate + UDP-N-acetyl-alpha-D-glucosamine = UDP-N-acetyl-3-O-(1-carboxyvinyl)-alpha-D-glucosamine + phosphate. The protein operates within cell wall biogenesis; peptidoglycan biosynthesis. In terms of biological role, cell wall formation. Adds enolpyruvyl to UDP-N-acetylglucosamine. The sequence is that of UDP-N-acetylglucosamine 1-carboxyvinyltransferase from Xanthomonas euvesicatoria pv. vesicatoria (strain 85-10) (Xanthomonas campestris pv. vesicatoria).